Consider the following 444-residue polypeptide: Serine/threonine-protein kinase 2 (444 aa).

The region spanning 87–444 (NRDFYHLSTG…WIDGKSTSHQ (358 aa)) is the Protein kinase domain. ATP is bound by residues 93 to 101 (LSTGGYGII) and K118. D307 functions as the Proton acceptor in the catalytic mechanism.

It belongs to the protein kinase superfamily. Ser/Thr protein kinase family. Poxviruses subfamily. Post-translationally, phosphorylated in vivo. Autophosphorylated in vitro.

It is found in the host endoplasmic reticulum. The protein localises to the host endoplasmic reticulum-Golgi intermediate compartment. It carries out the reaction L-seryl-[protein] + ATP = O-phospho-L-seryl-[protein] + ADP + H(+). The catalysed reaction is L-threonyl-[protein] + ATP = O-phospho-L-threonyl-[protein] + ADP + H(+). Functionally, essential serine-protein kinase involved in the early stage of virion morphogenesis. The chain is Serine/threonine-protein kinase 2 (OPG054) from Vertebrata (FPV).